The sequence spans 511 residues: UDP-N-acetylmuramoyl-L-alanyl-D-glutamate--2,6-diaminopimelate ligase (511 aa).

A UDP-N-acetyl-alpha-D-muramoyl-L-alanyl-D-glutamate-binding site is contributed by Ser-33. ATP is bound at residue 118-124 (GTNGKTT). UDP-N-acetyl-alpha-D-muramoyl-L-alanyl-D-glutamate contacts are provided by residues 160–161 (TT), Ser-187, Gln-193, and Arg-195. Lys-227 carries the post-translational modification N6-carboxylysine. Meso-2,6-diaminopimelate is bound by residues Arg-403, 427–430 (DNPR), Gly-478, and Glu-482. The Meso-diaminopimelate recognition motif signature appears at 427-430 (DNPR).

Belongs to the MurCDEF family. MurE subfamily. Mg(2+) serves as cofactor. Carboxylation is probably crucial for Mg(2+) binding and, consequently, for the gamma-phosphate positioning of ATP.

The protein localises to the cytoplasm. The enzyme catalyses UDP-N-acetyl-alpha-D-muramoyl-L-alanyl-D-glutamate + meso-2,6-diaminopimelate + ATP = UDP-N-acetyl-alpha-D-muramoyl-L-alanyl-gamma-D-glutamyl-meso-2,6-diaminopimelate + ADP + phosphate + H(+). It participates in cell wall biogenesis; peptidoglycan biosynthesis. In terms of biological role, catalyzes the addition of meso-diaminopimelic acid to the nucleotide precursor UDP-N-acetylmuramoyl-L-alanyl-D-glutamate (UMAG) in the biosynthesis of bacterial cell-wall peptidoglycan. In Prochlorococcus marinus subsp. pastoris (strain CCMP1986 / NIES-2087 / MED4), this protein is UDP-N-acetylmuramoyl-L-alanyl-D-glutamate--2,6-diaminopimelate ligase.